A 220-amino-acid polypeptide reads, in one-letter code: Vesicle-associated membrane protein 7 (220 aa).

Ala2 is modified (N-acetylalanine). The Cytoplasmic segment spans residues 2-188 (AILFAVVARG…ARAMCMKNLK (187 aa)). In terms of domain architecture, Longin spans 7 to 110 (VVARGTTILA…AMNSEFSSVL (104 aa)). In terms of domain architecture, v-SNARE coiled-coil homology spans 125–185 (KVMETQAQVD…RNLARAMCMK (61 aa)). Phosphoserine is present on residues Ser167 and Ser168. A helical; Anchor for type IV membrane protein membrane pass occupies residues 189–209 (LTIIIIIISVVFIYIIVSPLC). Over 210–220 (GGFTWPNCVKK) the chain is Vesicular.

It belongs to the synaptobrevin family. As to quaternary structure, component of the SNARE complex composed of STX4, SNAP23 and VAMP7 that binds SYT7 during lysosomal exocytosis. Component of the SNARE complex composed of STX7, STX8, VAMP7 and VTI1B that is required for heterotypic fusion of late endosomes with lysosomes. May interact with STX17. Interacts with PICALM. Interacts with RAB21.

It localises to the cytoplasmic vesicle. Its subcellular location is the secretory vesicle membrane. The protein resides in the golgi apparatus. It is found in the trans-Golgi network membrane. The protein localises to the late endosome membrane. It localises to the lysosome membrane. Its subcellular location is the endoplasmic reticulum membrane. The protein resides in the phagosome membrane. It is found in the synapse. The protein localises to the synaptosome. Functionally, involved in the targeting and/or fusion of transport vesicles to their target membrane during transport of proteins from the early endosome to the lysosome. Required for heterotypic fusion of late endosomes with lysosomes and homotypic lysosomal fusion. Required for calcium regulated lysosomal exocytosis. Involved in the export of chylomicrons from the endoplasmic reticulum to the cis Golgi. Required for exocytosis of mediators during eosinophil and neutrophil degranulation, and target cell killing by natural killer cells. Required for focal exocytosis of late endocytic vesicles during phagosome formation. In Bos taurus (Bovine), this protein is Vesicle-associated membrane protein 7 (VAMP7).